We begin with the raw amino-acid sequence, 266 residues long: Aspartate/glutamate leucyltransferase (266 aa).

The protein belongs to the R-transferase family. Bpt subfamily.

It is found in the cytoplasm. The catalysed reaction is N-terminal L-glutamyl-[protein] + L-leucyl-tRNA(Leu) = N-terminal L-leucyl-L-glutamyl-[protein] + tRNA(Leu) + H(+). It carries out the reaction N-terminal L-aspartyl-[protein] + L-leucyl-tRNA(Leu) = N-terminal L-leucyl-L-aspartyl-[protein] + tRNA(Leu) + H(+). In terms of biological role, functions in the N-end rule pathway of protein degradation where it conjugates Leu from its aminoacyl-tRNA to the N-termini of proteins containing an N-terminal aspartate or glutamate. In Rhizorhabdus wittichii (strain DSM 6014 / CCUG 31198 / JCM 15750 / NBRC 105917 / EY 4224 / RW1) (Sphingomonas wittichii), this protein is Aspartate/glutamate leucyltransferase.